A 70-amino-acid polypeptide reads, in one-letter code: ATP synthase subunit c (70 aa).

2 helical membrane passes run 4-24 and 45-65; these read IAAA…NGLI and LMFI…VIAF.

It belongs to the ATPase C chain family. F-type ATPases have 2 components, F(1) - the catalytic core - and F(0) - the membrane proton channel. F(1) has five subunits: alpha(3), beta(3), gamma(1), delta(1), epsilon(1). F(0) has three main subunits: a(1), b(2) and c(10-14). The alpha and beta chains form an alternating ring which encloses part of the gamma chain. F(1) is attached to F(0) by a central stalk formed by the gamma and epsilon chains, while a peripheral stalk is formed by the delta and b chains.

It localises to the cell membrane. Its function is as follows. F(1)F(0) ATP synthase produces ATP from ADP in the presence of a proton or sodium gradient. F-type ATPases consist of two structural domains, F(1) containing the extramembraneous catalytic core and F(0) containing the membrane proton channel, linked together by a central stalk and a peripheral stalk. During catalysis, ATP synthesis in the catalytic domain of F(1) is coupled via a rotary mechanism of the central stalk subunits to proton translocation. In terms of biological role, key component of the F(0) channel; it plays a direct role in translocation across the membrane. A homomeric c-ring of between 10-14 subunits forms the central stalk rotor element with the F(1) delta and epsilon subunits. The chain is ATP synthase subunit c from Bacillus licheniformis (strain ATCC 14580 / DSM 13 / JCM 2505 / CCUG 7422 / NBRC 12200 / NCIMB 9375 / NCTC 10341 / NRRL NRS-1264 / Gibson 46).